An 80-amino-acid chain; its full sequence is RNA-binding protein Hfq (80 aa).

One can recognise a Sm domain in the interval 10–69 (DPFLNTLRREHVPVSIYLVNGIKLQGQIESFDQYVVLLKNTVTQMVYKHAISTVVPARPV).

This sequence belongs to the Hfq family. In terms of assembly, homohexamer.

RNA chaperone that binds small regulatory RNA (sRNAs) and mRNAs to facilitate mRNA translational regulation in response to envelope stress, environmental stress and changes in metabolite concentrations. Also binds with high specificity to tRNAs. This is RNA-binding protein Hfq from Azoarcus sp. (strain BH72).